The following is a 346-amino-acid chain: tRNA N6-adenosine threonylcarbamoyltransferase (346 aa).

Fe cation contacts are provided by histidine 111 and histidine 115. Residues 134 to 138 (LVSGG), aspartate 167, glycine 180, and asparagine 277 contribute to the substrate site. Aspartate 305 is a Fe cation binding site.

Belongs to the KAE1 / TsaD family. Requires Fe(2+) as cofactor.

It localises to the cytoplasm. The catalysed reaction is L-threonylcarbamoyladenylate + adenosine(37) in tRNA = N(6)-L-threonylcarbamoyladenosine(37) in tRNA + AMP + H(+). Required for the formation of a threonylcarbamoyl group on adenosine at position 37 (t(6)A37) in tRNAs that read codons beginning with adenine. Is involved in the transfer of the threonylcarbamoyl moiety of threonylcarbamoyl-AMP (TC-AMP) to the N6 group of A37, together with TsaE and TsaB. TsaD likely plays a direct catalytic role in this reaction. This chain is tRNA N6-adenosine threonylcarbamoyltransferase, found in Bordetella pertussis (strain Tohama I / ATCC BAA-589 / NCTC 13251).